The primary structure comprises 83 residues: RNA-binding protein Hfq (83 aa).

One can recognise a Sm domain in the interval 9-68; it reads DPYLNILRKERIPVSIFLVNGIKLQGQIESFDQFVILLRNTVSQMVYKHAISTVVPSRNV.

It belongs to the Hfq family. In terms of assembly, homohexamer.

In terms of biological role, RNA chaperone that binds small regulatory RNA (sRNAs) and mRNAs to facilitate mRNA translational regulation in response to envelope stress, environmental stress and changes in metabolite concentrations. Also binds with high specificity to tRNAs. This chain is RNA-binding protein Hfq, found in Chromohalobacter salexigens (strain ATCC BAA-138 / DSM 3043 / CIP 106854 / NCIMB 13768 / 1H11).